We begin with the raw amino-acid sequence, 145 residues long: MIKCFDKNNEVYNLIKNLTERLNVEILEINIFRNKNGGKIQIVLYSKNFSLGIDLMTDLHKMILLILEANLKYSFILELSTPGIDRRIKSDKEFQIFEGKKIKLMLDNEFEEGFILEAKSKSFIFKTDSKELNVFYSDVKKARLV.

Belongs to the RimP family.

It is found in the cytoplasm. Functionally, required for maturation of 30S ribosomal subunits. The chain is Ribosome maturation factor RimP from Borreliella afzelii (strain PKo) (Borrelia afzelii).